The following is a 215-amino-acid chain: MSSENLPPDVIKRVVKELKELNSSTLEGITLLPCEEDITNIEAVVTGPAGTPYEGGYFKARLILSSDFPRSPPKANFITKIFHPNVSKKGEICVNTLKKDWTEDLGLKHILLTIKCLLIVPNAESSLNEDASRLLLENYDDYCKHAKLFTSIHASKPIIDSNNNNENSTTTPTTTTTATTPSTNTASISSPVKKKTETTNSTTTKVQPKKSLKRL.

Residues 9–155 (DVIKRVVKEL…AKLFTSIHAS (147 aa)) enclose the UBC core domain. The active-site Glycyl thioester intermediate is the Cys93. The disordered stretch occupies residues 159–215 (IDSNNNNENSTTTPTTTTTATTPSTNTASISSPVKKKTETTNSTTTKVQPKKSLKRL). Residues 161–190 (SNNNNENSTTTPTTTTTATTPSTNTASISS) show a composition bias toward low complexity.

The protein belongs to the ubiquitin-conjugating enzyme family.

The enzyme catalyses S-ubiquitinyl-[E1 ubiquitin-activating enzyme]-L-cysteine + [E2 ubiquitin-conjugating enzyme]-L-cysteine = [E1 ubiquitin-activating enzyme]-L-cysteine + S-ubiquitinyl-[E2 ubiquitin-conjugating enzyme]-L-cysteine.. It participates in protein modification; protein ubiquitination. Its function is as follows. Catalyzes the covalent attachment of ubiquitin to other proteins. Acts as an essential factor of the anaphase promoting complex/cyclosome (APC/C), a cell cycle-regulated ubiquitin ligase that controls progression through mitosis. Acts by specifically elongating polyubiquitin chains initiated by the E2 enzyme ubch10 on APC/C substrates, enhancing the degradation of APC/C substrates by the proteasome and promoting mitotic exit. This is Ubiquitin-conjugating enzyme E2 S (ube2s) from Dictyostelium discoideum (Social amoeba).